A 121-amino-acid polypeptide reads, in one-letter code: Large ribosomal subunit protein bL12 (121 aa).

It belongs to the bacterial ribosomal protein bL12 family. As to quaternary structure, homodimer. Part of the ribosomal stalk of the 50S ribosomal subunit. Forms a multimeric L10(L12)X complex, where L10 forms an elongated spine to which 2 to 4 L12 dimers bind in a sequential fashion. Binds GTP-bound translation factors.

Functionally, forms part of the ribosomal stalk which helps the ribosome interact with GTP-bound translation factors. Is thus essential for accurate translation. The polypeptide is Large ribosomal subunit protein bL12 (Mesomycoplasma hyopneumoniae (strain 7448) (Mycoplasma hyopneumoniae)).